Reading from the N-terminus, the 300-residue chain is tRNA dimethylallyltransferase (300 aa).

8 to 15 (GASASGKS) is an ATP binding site. A substrate-binding site is contributed by 10 to 15 (SASGKS). An interaction with substrate tRNA region spans residues 33–36 (DSLS).

It belongs to the IPP transferase family. As to quaternary structure, monomer. The cofactor is Mg(2+).

It catalyses the reaction adenosine(37) in tRNA + dimethylallyl diphosphate = N(6)-dimethylallyladenosine(37) in tRNA + diphosphate. Catalyzes the transfer of a dimethylallyl group onto the adenine at position 37 in tRNAs that read codons beginning with uridine, leading to the formation of N6-(dimethylallyl)adenosine (i(6)A). The protein is tRNA dimethylallyltransferase of Wolinella succinogenes (strain ATCC 29543 / DSM 1740 / CCUG 13145 / JCM 31913 / LMG 7466 / NCTC 11488 / FDC 602W) (Vibrio succinogenes).